We begin with the raw amino-acid sequence, 171 residues long: Adenine phosphoribosyltransferase (171 aa).

This sequence belongs to the purine/pyrimidine phosphoribosyltransferase family. In terms of assembly, homodimer.

Its subcellular location is the cytoplasm. The enzyme catalyses AMP + diphosphate = 5-phospho-alpha-D-ribose 1-diphosphate + adenine. The protein operates within purine metabolism; AMP biosynthesis via salvage pathway; AMP from adenine: step 1/1. Functionally, catalyzes a salvage reaction resulting in the formation of AMP, that is energically less costly than de novo synthesis. The chain is Adenine phosphoribosyltransferase from Methylococcus capsulatus (strain ATCC 33009 / NCIMB 11132 / Bath).